The following is a 324-amino-acid chain: GSDLLTPGDNKTAHDSYAFLVNWLERFPQYKYRDFYIAGESYAGHYVPQLSQLVHRNNKGVRKPILNFKGFMVGNAVIDDYHDFVGTFEYWWTHGLISDDTYQKLQLACEFDSAEHESEACNKINNVAEAEEGLIDAYSIYTPTCKKTSLHRRRLIKGRRPWLPRGYDPCTEQYSTKYYNLPEVQKAFRANVTGIPYSWTACSDVLSDHWKDSPRSMLPIYRELIAAGIRIWVFSGDADSVVPLTATRYSIDALYLPTVTNWYPWYDEEEVAGWCQVYKGLTLVTIRGAGHEVPLHRPQQALKLFEHFLQDKPMPRPAHSIQSF.

Residue Asn10 is glycosylated (N-linked (GlcNAc...) asparagine). Residue Ser41 is part of the active site. Intrachain disulfides connect Cys109-Cys121 and Cys145-Cys170. Positions 150 to 162 (LHRRRLIKGRRPW) are cleaved as a propeptide — linker peptide. N-linked (GlcNAc...) asparagine glycosylation occurs at Asn191. Residues Asp239 and His291 contribute to the active site.

It belongs to the peptidase S10 family. In terms of assembly, carboxypeptidase II is a dimer, where each monomer is composed of two chains linked by a disulfide bond. In terms of processing, the linker peptide is endoproteolytically excised during enzyme maturation.

The catalysed reaction is Preferential release of a C-terminal arginine or lysine residue.. In Hordeum vulgare (Barley), this protein is Serine carboxypeptidase II-1 (CXP;2-1).